The following is a 252-amino-acid chain: Small ribosomal subunit protein eS1A (252 aa).

Ala2 is modified (N-acetylalanine; partial).

It belongs to the eukaryotic ribosomal protein eS1 family. Component of the small ribosomal subunit (SSU). Mature yeast ribosomes consist of a small (40S) and a large (60S) subunit. The 40S small subunit contains 1 molecule of ribosomal RNA (18S rRNA) and at least 33 different proteins. The large 60S subunit contains 3 rRNA molecules (25S, 5.8S and 5S rRNA) and at least 46 different proteins. eS1 interacts directly with uS11 and eS26, which form part of the mRNA exit tunnel.

The protein localises to the cytoplasm. Functionally, component of the ribosome, a large ribonucleoprotein complex responsible for the synthesis of proteins in the cell. The small ribosomal subunit (SSU) binds messenger RNAs (mRNAs) and translates the encoded message by selecting cognate aminoacyl-transfer RNA (tRNA) molecules. The large subunit (LSU) contains the ribosomal catalytic site termed the peptidyl transferase center (PTC), which catalyzes the formation of peptide bonds, thereby polymerizing the amino acids delivered by tRNAs into a polypeptide chain. The nascent polypeptides leave the ribosome through a tunnel in the LSU and interact with protein factors that function in enzymatic processing, targeting, and the membrane insertion of nascent chains at the exit of the ribosomal tunnel. The sequence is that of Small ribosomal subunit protein eS1A (rps101) from Schizosaccharomyces pombe (strain 972 / ATCC 24843) (Fission yeast).